A 319-amino-acid polypeptide reads, in one-letter code: D-ribose/D-allose-binding protein (319 aa).

The first 29 residues, 1–29 (MKRVASRRLLAAVVLTACSSFLPLSAVHA), serve as a signal peptide directing secretion.

This sequence belongs to the bacterial solute-binding protein 2 family.

It localises to the periplasm. Its function is as follows. Binds specifically both D-ribose and D-allose, with affinities in the lower micromolar range. The polypeptide is D-ribose/D-allose-binding protein (Pseudomonas aeruginosa (strain ATCC 15692 / DSM 22644 / CIP 104116 / JCM 14847 / LMG 12228 / 1C / PRS 101 / PAO1)).